We begin with the raw amino-acid sequence, 526 residues long: Protein spinster homolog 1 (526 aa).

Residues 1–43 (MTSRSSQGDAAPFLTQADNTEEEGAPDPGGHSSDEEEEEGKDH) form a disordered region. 12 helical membrane-spanning segments follow: residues 48 to 68 (HLLT…LFYI), 98 to 118 (GLVQ…FGYL), 126 to 146 (LIMC…SFVS), 159 to 179 (LVGV…ADLF), 187 to 207 (MLSF…IAGS), 218 to 238 (WALR…IFVA), 272 to 292 (FILS…LALW), 321 to 341 (MIFG…GVEI), 355 to 375 (LVCA…LAFA), 385 to 405 (FIFI…DILL), 419 to 439 (LQIV…IGVI), and 463 to 483 (MICA…ALFI).

It belongs to the major facilitator superfamily. Spinster (TC 2.A.1.49) family.

Its subcellular location is the lysosome membrane. The catalysed reaction is a 1-acyl-sn-glycero-3-phosphocholine(out) + H(+)(out) = a 1-acyl-sn-glycero-3-phosphocholine(in) + H(+)(in). It catalyses the reaction a 1-acyl-sn-glycero-3-phosphoethanolamine(out) + H(+)(out) = a 1-acyl-sn-glycero-3-phosphoethanolamine(in) + H(+)(in). The enzyme catalyses a 1-O-(1Z-alkenyl)-sn-glycero-3-phosphocholine(out) + H(+)(out) = a 1-O-(1Z-alkenyl)-sn-glycero-3-phosphocholine(in) + H(+)(in). It carries out the reaction a 1-O-(1Z-alkenyl)-sn-glycero-3-phosphoethanolamine(out) + H(+)(out) = a 1-O-(1Z-alkenyl)-sn-glycero-3-phosphoethanolamine(in) + H(+)(in). Mediates the rate-limiting, proton-dependent, lysosomal efflux of lysophospholipids. Selective for zwitterionic headgroups such as lysophosphatidylcholine (LPC) and lysophosphatidylethanolamine (LPE). Essential player in lysosomal homeostasis. This is Protein spinster homolog 1 (spns1) from Xenopus tropicalis (Western clawed frog).